The primary structure comprises 461 residues: NADH-ubiquinone oxidoreductase chain 4 (461 aa).

The next 13 helical transmembrane spans lie at 20 to 42 (PAWL…LTWL), 61 to 81 (PLST…ILAS), 93 to 113 (QRSF…AFGA), 114 to 134 (TEII…LIII), 147 to 167 (GTYF…ALLM), 197 to 217 (WTAC…HLWL), 225 to 245 (PIAG…YGMM), 258 to 278 (LAYP…SICL), 285 to 304 (SLIA…GILT), 309 to 331 (GFTG…FCLA), 351 to 371 (VILP…LALP), 393 to 413 (TLTM…HMFL), and 436 to 456 (LLMT…ELIW).

It belongs to the complex I subunit 4 family.

It is found in the mitochondrion membrane. The catalysed reaction is a ubiquinone + NADH + 5 H(+)(in) = a ubiquinol + NAD(+) + 4 H(+)(out). Functionally, core subunit of the mitochondrial membrane respiratory chain NADH dehydrogenase (Complex I) that is believed to belong to the minimal assembly required for catalysis. Complex I functions in the transfer of electrons from NADH to the respiratory chain. The immediate electron acceptor for the enzyme is believed to be ubiquinone. This Latimeria chalumnae (Coelacanth) protein is NADH-ubiquinone oxidoreductase chain 4 (MT-ND4).